The sequence spans 642 residues: Threonine--tRNA ligase (642 aa).

A TGS domain is found at 1 to 61 (MPVITLPDGS…DADATVAIIT (61 aa)). Residues 243 to 534 (DHRKIGKQLD…LTEEFAGFFP (292 aa)) are catalytic. Residues Cys334, His385, and His511 each contribute to the Zn(2+) site.

The protein belongs to the class-II aminoacyl-tRNA synthetase family. In terms of assembly, homodimer. It depends on Zn(2+) as a cofactor.

It is found in the cytoplasm. The enzyme catalyses tRNA(Thr) + L-threonine + ATP = L-threonyl-tRNA(Thr) + AMP + diphosphate + H(+). Functionally, catalyzes the attachment of threonine to tRNA(Thr) in a two-step reaction: L-threonine is first activated by ATP to form Thr-AMP and then transferred to the acceptor end of tRNA(Thr). Also edits incorrectly charged L-seryl-tRNA(Thr). This Edwardsiella ictaluri (strain 93-146) protein is Threonine--tRNA ligase.